The primary structure comprises 333 residues: Squamosa promoter-binding-like protein 8 (333 aa).

Positions 1-28 (MLDYEWDNPSSIVLSGDERNPDSDPTRS) are disordered. Residues 16 to 25 (GDERNPDSDP) are compositionally biased toward basic and acidic residues. Residues 179–269 (MANSLSTPRC…RKCHQSASAT (91 aa)) form a sufficient and necessary for DNA binding region. The SBP-type zinc finger occupies 185 to 262 (TPRCQAEGCN…ADHNRRRRKC (78 aa)). Positions 188, 193, 210, 213, 229, 232, 236, and 248 each coordinate Zn(2+). Residues 245–261 (KRSCRKRLADHNRRRRK) carry the Bipartite nuclear localization signal motif. Disordered stretches follow at residues 254 to 303 (DHNR…TISL) and 314 to 333 (TASSSTSASSSSNSMFFSSG). Residues 264-284 (QSASATQDTGTGKTTPKSPND) show a composition bias toward polar residues. Residues 289–299 (ASSSPSSNAPP) show a composition bias toward low complexity.

It depends on Zn(2+) as a cofactor. Expressed in shoot apical region and early floral tissues. Transcripts levels increase in developing pollen sacs, and decrease in later stage of anther development. Strongly expressed in the placental region of the carpels.

The protein localises to the nucleus. It is found in the cytoplasm. Its function is as follows. Trans-acting factor that binds specifically to the consensus nucleotide sequence 5'-TNCGTACAA-3'. Binds specifically to the 5'-GTAC-3' core sequence. Involved in development and floral organogenesis. Required for ovule differentiation, pollen production, filament elongation, seed formation and siliques elongation. Also seems to play a role in the formation of trichomes on sepals. May positively modulate gibberellin (GA) signaling in flower. This Arabidopsis thaliana (Mouse-ear cress) protein is Squamosa promoter-binding-like protein 8 (SPL8).